We begin with the raw amino-acid sequence, 647 residues long: DNA mismatch repair protein MutL (647 aa).

The protein belongs to the DNA mismatch repair MutL/HexB family.

Functionally, this protein is involved in the repair of mismatches in DNA. It is required for dam-dependent methyl-directed DNA mismatch repair. May act as a 'molecular matchmaker', a protein that promotes the formation of a stable complex between two or more DNA-binding proteins in an ATP-dependent manner without itself being part of a final effector complex. This Bacillus thuringiensis subsp. konkukian (strain 97-27) protein is DNA mismatch repair protein MutL.